Here is a 482-residue protein sequence, read N- to C-terminus: ATP synthase subunit beta (482 aa).

168-175 (GGAGVGKT) contributes to the ATP binding site.

It belongs to the ATPase alpha/beta chains family. As to quaternary structure, F-type ATPases have 2 components, CF(1) - the catalytic core - and CF(0) - the membrane proton channel. CF(1) has five subunits: alpha(3), beta(3), gamma(1), delta(1), epsilon(1). CF(0) has three main subunits: a(1), b(2) and c(9-12). The alpha and beta chains form an alternating ring which encloses part of the gamma chain. CF(1) is attached to CF(0) by a central stalk formed by the gamma and epsilon chains, while a peripheral stalk is formed by the delta and b chains.

The protein localises to the cell membrane. The catalysed reaction is ATP + H2O + 4 H(+)(in) = ADP + phosphate + 5 H(+)(out). Its function is as follows. Produces ATP from ADP in the presence of a proton gradient across the membrane. The catalytic sites are hosted primarily by the beta subunits. In Nocardia farcinica (strain IFM 10152), this protein is ATP synthase subunit beta.